Here is a 73-residue protein sequence, read N- to C-terminus: Dermaseptin-1 (73 aa).

Residues 1–22 (MAFLKKSIFLALFLGMVSLSIC) form the signal peptide. A propeptide spans 23-43 (EEEKRENEGEEEQEDDEQSEM) (removed in mature form). The disordered stretch occupies residues 25–46 (EKRENEGEEEQEDDEQSEMKRG). Over residues 30-40 (EGEEEQEDDEQ) the composition is skewed to acidic residues. Leucine amide is present on Leu70. A propeptide spans 72 to 73 (EQ) (removed in mature form).

As to expression, expressed by the skin glands.

The protein resides in the secreted. Its function is as follows. Has antiparasitic activity against trypomastigote form of T.cruzi (IC(50)=0.68 uM) in vitro but not against L.infantum. Probably acts by permeabilizing cell membranes. In vitro, shows no cytotoxicity against macrophages. Has antibacterial activity. The chain is Dermaseptin-1 from Pithecopus nordestinus (Northeastern Brazilian leaf frog).